Reading from the N-terminus, the 294-residue chain is UPF0761 membrane protein YPTS_0028 (294 aa).

Transmembrane regions (helical) follow at residues 44–64 (LLSLVPLITVIFALFAAFPMF), 67–87 (ISIKLKAFIFANFIPATGDII), 108–128 (GLIVTALLLIYSVDSVLNIIW), 136–156 (LVFSFAVYWMVLTLGPILVGA), 185–205 (VFPLLISWVSFWLLYSVVPTV), 212–232 (ALIGALVAALLFELGKKGFAM), and 246–266 (VLAVIPILFLWVYWSWCIVLL).

Belongs to the UPF0761 family.

The protein resides in the cell inner membrane. In Yersinia pseudotuberculosis serotype IB (strain PB1/+), this protein is UPF0761 membrane protein YPTS_0028.